The following is a 752-amino-acid chain: Polyribonucleotide nucleotidyltransferase (752 aa).

Residues D519 and D525 each coordinate Mg(2+). The KH domain maps to P585–I644. Positions G656–V728 constitute an S1 motif domain. Residues P727–I752 form a disordered region.

It belongs to the polyribonucleotide nucleotidyltransferase family. Requires Mg(2+) as cofactor.

The protein resides in the cytoplasm. The catalysed reaction is RNA(n+1) + phosphate = RNA(n) + a ribonucleoside 5'-diphosphate. Its function is as follows. Involved in mRNA degradation. Catalyzes the phosphorolysis of single-stranded polyribonucleotides processively in the 3'- to 5'-direction. The chain is Polyribonucleotide nucleotidyltransferase from Pseudarthrobacter chlorophenolicus (strain ATCC 700700 / DSM 12829 / CIP 107037 / JCM 12360 / KCTC 9906 / NCIMB 13794 / A6) (Arthrobacter chlorophenolicus).